The following is a 128-amino-acid chain: Cystatin-1 (128 aa).

Positions 1 to 17 (MIRSAVVLTVLVGVCLA) are cleaved as a signal peptide. The Cystatin domain occupies 20–128 (GFVGGWSQVD…TKEVTSFECN (109 aa)). Disulfide bonds link Cys84–Cys96 and Cys107–Cys127.

This sequence belongs to the cystatin family. In terms of tissue distribution, mainly expressed in gut.

The protein localises to the secreted. Inhibitor of cysteine proteinases. Strongly inhibits mammalian cathepsin B and H, and moderately inhibits mammalian cathepsin C. Also inhibits endogenous cathepsin B-like but not cathepsin C-like proteinases. May have a protective role against undesired digestion of a stored blood meal by endogenous peptidases. The protein is Cystatin-1 of Ornithodoros moubata (Soft tick).